A 594-amino-acid chain; its full sequence is UvrABC system protein C (594 aa).

A GIY-YIG domain is found at 14–91 (DQPGCYLMKD…IKKYDPKYNI (78 aa)). Residues 196–231 (KEVRSELEIKMYEASEKLEFERAKELRDQIAHIDAI) form the UVR domain.

Belongs to the UvrC family. In terms of assembly, interacts with UvrB in an incision complex.

Its subcellular location is the cytoplasm. The UvrABC repair system catalyzes the recognition and processing of DNA lesions. UvrC both incises the 5' and 3' sides of the lesion. The N-terminal half is responsible for the 3' incision and the C-terminal half is responsible for the 5' incision. In Bacillus cereus (strain B4264), this protein is UvrABC system protein C.